A 43-amino-acid polypeptide reads, in one-letter code: Potassium channel toxin gamma-KTx 4.3 (43 aa).

4 disulfides stabilise this stretch: Cys5–Cys23, Cys11–Cys34, Cys20–Cys39, and Cys24–Cys41.

The protein belongs to the ergtoxin family. Gamma-KTx 4 subfamily. In terms of tissue distribution, expressed by the venom gland.

Its subcellular location is the secreted. Its function is as follows. Reversibly blocks Kv11/ERG potassium channels. This is Potassium channel toxin gamma-KTx 4.3 from Centruroides exilicauda (Bark scorpion).